The sequence spans 206 residues: MKAEVIKLDASSAGSIELDDAIFGLEPRADILHRVVRWQRAKAQAGTHSVLGKSDVSYSTKKIYRQKGTGGARHGSKKAPIFRHGGVYKGPTPRSHAHDLNKKFRALGLKHALSSKATTGNLIVIEDIAMSEAKTALLAKAVKELGWKRVLVIDGADINENFAKAARNLEGIDVLPSIGANVYDILKRDTLVITKAGVEALEARLK.

This sequence belongs to the universal ribosomal protein uL4 family. As to quaternary structure, part of the 50S ribosomal subunit.

One of the primary rRNA binding proteins, this protein initially binds near the 5'-end of the 23S rRNA. It is important during the early stages of 50S assembly. It makes multiple contacts with different domains of the 23S rRNA in the assembled 50S subunit and ribosome. Its function is as follows. Forms part of the polypeptide exit tunnel. The chain is Large ribosomal subunit protein uL4 from Cereibacter sphaeroides (strain ATCC 17025 / ATH 2.4.3) (Rhodobacter sphaeroides).